Reading from the N-terminus, the 155-residue chain is 2-C-methyl-D-erythritol 2,4-cyclodiphosphate synthase (155 aa).

The a divalent metal cation site is built by Asp-8 and His-10. Residues 8-10 (DVH) and 34-35 (HS) contribute to the 4-CDP-2-C-methyl-D-erythritol 2-phosphate site. Position 42 (His-42) interacts with a divalent metal cation. Residues 56 to 58 (DIG), 61 to 65 (FPDKD), 132 to 135 (TTTE), and Arg-142 contribute to the 4-CDP-2-C-methyl-D-erythritol 2-phosphate site.

It belongs to the IspF family. In terms of assembly, homotrimer. Requires a divalent metal cation as cofactor.

It catalyses the reaction 4-CDP-2-C-methyl-D-erythritol 2-phosphate = 2-C-methyl-D-erythritol 2,4-cyclic diphosphate + CMP. It participates in isoprenoid biosynthesis; isopentenyl diphosphate biosynthesis via DXP pathway; isopentenyl diphosphate from 1-deoxy-D-xylulose 5-phosphate: step 4/6. Its function is as follows. Involved in the biosynthesis of isopentenyl diphosphate (IPP) and dimethylallyl diphosphate (DMAPP), two major building blocks of isoprenoid compounds. Catalyzes the conversion of 4-diphosphocytidyl-2-C-methyl-D-erythritol 2-phosphate (CDP-ME2P) to 2-C-methyl-D-erythritol 2,4-cyclodiphosphate (ME-CPP) with a corresponding release of cytidine 5-monophosphate (CMP). The polypeptide is 2-C-methyl-D-erythritol 2,4-cyclodiphosphate synthase (Desulfatibacillum aliphaticivorans).